The following is a 745-amino-acid chain: Serine/threonine-protein kinase GG21441 (745 aa).

The interval 49–73 (RNQQQNVQKDFDSHNRDCDSPVSST) is disordered. The segment covering 57–67 (KDFDSHNRDCD) has biased composition (basic and acidic residues). 2 Doublecortin domains span residues 159–245 (LRIK…VEYN) and 315–398 (RIVT…AEDF). The Protein kinase domain occupies 479-737 (YTLGRIIGDG…SEDILDHYWT (259 aa)). ATP contacts are provided by residues 485 to 493 (IGDGNFAIV) and Lys-508. Asp-600 (proton acceptor) is an active-site residue.

Belongs to the protein kinase superfamily. CAMK Ser/Thr protein kinase family. CaMK subfamily.

It catalyses the reaction L-seryl-[protein] + ATP = O-phospho-L-seryl-[protein] + ADP + H(+). It carries out the reaction L-threonyl-[protein] + ATP = O-phospho-L-threonyl-[protein] + ADP + H(+). This chain is Serine/threonine-protein kinase GG21441, found in Drosophila erecta (Fruit fly).